A 342-amino-acid polypeptide reads, in one-letter code: Thiosulfate/3-mercaptopyruvate sulfurtransferase 2 (342 aa).

Rhodanese domains are found at residues 56-173 (GDAD…DVES) and 224-338 (EDKT…LPIV). Cysteine 298 (cysteine persulfide intermediate) is an active-site residue.

As to expression, expressed in roots, rosette and cauline leaves, stems, flowers and siliques.

It localises to the cytoplasm. It carries out the reaction thiosulfate + hydrogen cyanide = thiocyanate + sulfite + 2 H(+). The enzyme catalyses 2-oxo-3-sulfanylpropanoate + [thioredoxin]-dithiol = [thioredoxin]-disulfide + hydrogen sulfide + pyruvate + H(+). Catalyzes the transfer of a sulfur ion from a donor to cyanide or to other thiol compounds. Substrate preference is 3-mercaptopyruvate &gt; thiosulfate. Involved in embryo and seed development. This chain is Thiosulfate/3-mercaptopyruvate sulfurtransferase 2 (STR2), found in Arabidopsis thaliana (Mouse-ear cress).